The primary structure comprises 354 residues: GTPase Obg (354 aa).

The Obg domain maps to 1 to 159 (MKFLDQCKIY…LWVWLRLKLI (159 aa)). Residues 160–328 (ADVGLVGLPN…LLRAAFTQVR (169 aa)) form the OBG-type G domain. GTP-binding positions include 166–173 (GLPNAGKS), 191–195 (FTTLT), 213–216 (DIPG), 280–283 (NKVD), and 309–311 (SGV). The Mg(2+) site is built by serine 173 and threonine 193. A disordered region spans residues 333-354 (ETPAEAAIDEAPEEETPGGWQP). The span at 339-348 (AIDEAPEEET) shows a compositional bias: acidic residues.

Belongs to the TRAFAC class OBG-HflX-like GTPase superfamily. OBG GTPase family. Monomer. It depends on Mg(2+) as a cofactor.

The protein resides in the cytoplasm. In terms of biological role, an essential GTPase which binds GTP, GDP and possibly (p)ppGpp with moderate affinity, with high nucleotide exchange rates and a fairly low GTP hydrolysis rate. Plays a role in control of the cell cycle, stress response, ribosome biogenesis and in those bacteria that undergo differentiation, in morphogenesis control. The sequence is that of GTPase Obg from Caulobacter sp. (strain K31).